A 229-amino-acid polypeptide reads, in one-letter code: Ribosomal RNA small subunit methyltransferase G (229 aa).

S-adenosyl-L-methionine contacts are provided by residues G71, A122–E123, and R139.

It belongs to the methyltransferase superfamily. RNA methyltransferase RsmG family.

The protein localises to the cytoplasm. In terms of biological role, specifically methylates the N7 position of a guanine in 16S rRNA. This is Ribosomal RNA small subunit methyltransferase G from Thermotoga neapolitana (strain ATCC 49049 / DSM 4359 / NBRC 107923 / NS-E).